The following is a 185-amino-acid chain: Elongation factor P (185 aa).

It belongs to the elongation factor P family.

It localises to the cytoplasm. It participates in protein biosynthesis; polypeptide chain elongation. In terms of biological role, involved in peptide bond synthesis. Stimulates efficient translation and peptide-bond synthesis on native or reconstituted 70S ribosomes in vitro. Probably functions indirectly by altering the affinity of the ribosome for aminoacyl-tRNA, thus increasing their reactivity as acceptors for peptidyl transferase. In Burkholderia ambifaria (strain MC40-6), this protein is Elongation factor P.